We begin with the raw amino-acid sequence, 579 residues long: Leucine-rich repeat-containing protein 15 (579 aa).

Residues 1–21 form the signal peptide; that stretch reads MPLKHYLLLLVSCQAWAAGLA. Residues 22-53 enclose the LRRNT domain; sequence YYGCPSECTCSRASQVECTGAQIVAMPSPLPW. Over 22–536 the chain is Extracellular; that stretch reads YYGCPSECTC…TWGMTDAQSG (515 aa). LRR repeat units follow at residues 54–75, 78–99, 102–123, 126–147, 150–171, 174–195, 198–219, 222–243, 246–267, 270–291, 294–315, 318–339, 342–363, 366–387, and 390–411; these read NAMS…KFLN, ALIA…AFRN, SLRH…LFQD, NLET…QFSQ, NLKE…VFDH, GLTK…VFQH, NLQV…TFDA, NLQE…LFHN, NLQR…IFMQ, HLNK…VFGP, NLRE…AFSH, QLQV…AFNG, NLRE…VFRS, NLRN…IFAN, and GLMT…IFDH. Asn-75 carries an N-linked (GlcNAc...) asparagine glycan. Asn-369 carries N-linked (GlcNAc...) asparagine glycosylation. The LRRCT domain maps to 423 to 473; the sequence is NPWRCDSNILPLHDWLILNRARLGTDTLPVCSSPASVRGQSLVIINVNFPG. The interval 476 to 509 is disordered; that stretch reads VQGPETPEVSSYPDTSSYPDSTSISSTTEITRST. Residues 485 to 506 show a composition bias toward low complexity; that stretch reads SSYPDTSSYPDSTSISSTTEIT. The helical transmembrane segment at 537-557 threads the bilayer; the sequence is LAIAAIVIGIIALACSLAACI. Residues 558–579 are Cytoplasmic-facing; it reads CCCCCKKRSQAVLMQMKAPNEC.

Expressed in chodrocytes (at protein level).

The protein localises to the cell membrane. In Mus musculus (Mouse), this protein is Leucine-rich repeat-containing protein 15 (Lrrc15).